Consider the following 205-residue polypeptide: Putative 3-methyladenine DNA glycosylase (205 aa).

The protein belongs to the DNA glycosylase MPG family.

This is Putative 3-methyladenine DNA glycosylase from Mycolicibacterium paratuberculosis (strain ATCC BAA-968 / K-10) (Mycobacterium paratuberculosis).